Reading from the N-terminus, the 474-residue chain is Synaptotagmin-17 (474 aa).

Residues 60–112 (WLMASRSSDKDGDSVHTASEVPLTPRTNSPDGRRSSSDTSKSTYSLTRRISSL) form a disordered region. Residues 96-112 (SDTSKSTYSLTRRISSL) show a composition bias toward low complexity. Phosphoserine is present on residues Ser-118 and Ser-119. 2 consecutive C2 domains span residues 184 to 310 (QLGM…HWWK) and 321 to 455 (ELGE…EQWH).

This sequence belongs to the synaptotagmin family.

Its subcellular location is the membrane. Plays a role in dendrite formation by melanocytes. This Pongo abelii (Sumatran orangutan) protein is Synaptotagmin-17 (SYT17).